A 122-amino-acid polypeptide reads, in one-letter code: MIQQESRLKVADNSGAREILTIKVLGGSGRKFAGVGDMIVATVKQAIPGGNVKKGDVVKAVIVRTVSDVRRADGSYINFDENAAVIVKDDKSPVGTRIFGPVARELRDSDYMRIVSLAPEVL.

This sequence belongs to the universal ribosomal protein uL14 family. Part of the 50S ribosomal subunit. Forms a cluster with proteins L3 and L19. In the 70S ribosome, L14 and L19 interact and together make contacts with the 16S rRNA in bridges B5 and B8.

Binds to 23S rRNA. Forms part of two intersubunit bridges in the 70S ribosome. This chain is Large ribosomal subunit protein uL14, found in Leuconostoc citreum (strain KM20).